Here is a 282-residue protein sequence, read N- to C-terminus: 2-dehydro-3-deoxyphosphooctonate aldolase (282 aa).

It belongs to the KdsA family.

It is found in the cytoplasm. It catalyses the reaction D-arabinose 5-phosphate + phosphoenolpyruvate + H2O = 3-deoxy-alpha-D-manno-2-octulosonate-8-phosphate + phosphate. It functions in the pathway carbohydrate biosynthesis; 3-deoxy-D-manno-octulosonate biosynthesis; 3-deoxy-D-manno-octulosonate from D-ribulose 5-phosphate: step 2/3. The protein operates within bacterial outer membrane biogenesis; lipopolysaccharide biosynthesis. The polypeptide is 2-dehydro-3-deoxyphosphooctonate aldolase (Shewanella sp. (strain ANA-3)).